A 202-amino-acid chain; its full sequence is NADH-quinone oxidoreductase subunit C (202 aa).

It belongs to the complex I 30 kDa subunit family. NDH-1 is composed of 14 different subunits. Subunits NuoB, C, D, E, F, and G constitute the peripheral sector of the complex.

It localises to the cell inner membrane. The catalysed reaction is a quinone + NADH + 5 H(+)(in) = a quinol + NAD(+) + 4 H(+)(out). NDH-1 shuttles electrons from NADH, via FMN and iron-sulfur (Fe-S) centers, to quinones in the respiratory chain. The immediate electron acceptor for the enzyme in this species is believed to be ubiquinone. Couples the redox reaction to proton translocation (for every two electrons transferred, four hydrogen ions are translocated across the cytoplasmic membrane), and thus conserves the redox energy in a proton gradient. The polypeptide is NADH-quinone oxidoreductase subunit C (Albidiferax ferrireducens (strain ATCC BAA-621 / DSM 15236 / T118) (Rhodoferax ferrireducens)).